A 93-amino-acid chain; its full sequence is Large ribosomal subunit protein bL31 (93 aa).

A disordered region spans residues 72–93 (VKTVSSNADNQKETTEELIKNK). Residues 81-93 (NQKETTEELIKNK) are compositionally biased toward basic and acidic residues.

This sequence belongs to the bacterial ribosomal protein bL31 family. Type A subfamily. In terms of assembly, part of the 50S ribosomal subunit.

Binds the 23S rRNA. This chain is Large ribosomal subunit protein bL31, found in Onion yellows phytoplasma (strain OY-M).